A 91-amino-acid chain; its full sequence is Probable Fe(2+)-trafficking protein (91 aa).

It belongs to the Fe(2+)-trafficking protein family.

Could be a mediator in iron transactions between iron acquisition and iron-requiring processes, such as synthesis and/or repair of Fe-S clusters in biosynthetic enzymes. The polypeptide is Probable Fe(2+)-trafficking protein (Paraburkholderia phytofirmans (strain DSM 17436 / LMG 22146 / PsJN) (Burkholderia phytofirmans)).